We begin with the raw amino-acid sequence, 468 residues long: Nicotinamide phosphoribosyltransferase (468 aa).

Arginine 180 contributes to the diphosphate binding site. Position 203 (aspartate 203) interacts with beta-nicotinamide D-ribonucleotide. 2 residues coordinate diphosphate: histidine 229 and arginine 293. Histidine 229 is modified (phosphohistidine; by autocatalysis). Beta-nicotinamide D-ribonucleotide-binding residues include aspartate 335 and arginine 373.

The protein belongs to the NAPRTase family. Homodimer. The dimeric structure consists of two protomers arranged head to tail, with domain A on one protomer interacting with domain B on the other protomer. In terms of processing, phosphorylation at His-229 plays a crucial role in enhancing the substrate affinity and is important for maintaining enzymatic activity.

The catalysed reaction is beta-nicotinamide D-ribonucleotide + diphosphate = 5-phospho-alpha-D-ribose 1-diphosphate + nicotinamide + H(+). It functions in the pathway cofactor biosynthesis; NAD(+) biosynthesis; nicotinamide D-ribonucleotide from 5-phospho-alpha-D-ribose 1-diphosphate and nicotinamide: step 1/1. Its activity is regulated as follows. ATP-dependent autophosphorylation plays a vital role in nicotinamide binding and enzyme activation. Activity is inhibited by FK866. Catalyzes the condensation of nicotinamide with 5-phosphoribosyl-1-pyrophosphate to yield nicotinamide mononucleotide, an intermediate in the biosynthesis of NAD. Plays an important role in the biosynthesis of NAD via the nicotinamide (NAM) salvage pathway. Is also capable of hydrolyzing ATP and shows ATP-dependent autophosphorylation activity. This is Nicotinamide phosphoribosyltransferase from Xanthomonas campestris pv. campestris (strain 8004).